A 447-amino-acid polypeptide reads, in one-letter code: Ion-translocating oxidoreductase complex subunit C (447 aa).

4Fe-4S ferredoxin-type domains are found at residues 359–389 (AEVLRDEATVCIHCARCVDVCPMNLLPGRIA) and 399–430 (RCREYFALNCIECGECAVVCPAKRHLVQLIRY). [4Fe-4S] cluster-binding residues include Cys-369, Cys-372, Cys-375, Cys-379, Cys-408, Cys-411, Cys-414, and Cys-418.

Belongs to the 4Fe4S bacterial-type ferredoxin family. RnfC subfamily. As to quaternary structure, the Rnf complex is probably composed of eight subunits, including RnfA, RnfB, RnfC, RnfD, RnfE and RnfG. It depends on [4Fe-4S] cluster as a cofactor.

The protein resides in the cell membrane. Its function is as follows. Part of a membrane-bound complex that couples electron transfer with translocation of ions across the membrane. Catalyzes Na(+) transport, most probably coupled to electron transfer from reduced ferredoxin to methanophenazine and heterodisulfide reductase. Involved in heterodisulfide reduction during methanogenesis from acetate. This is Ion-translocating oxidoreductase complex subunit C from Methanosarcina acetivorans (strain ATCC 35395 / DSM 2834 / JCM 12185 / C2A).